The sequence spans 335 residues: ATP-dependent 6-phosphofructokinase (335 aa).

ATP is bound at residue glycine 11. Residue 21–25 participates in ADP binding; sequence RAVVR. Residues 72–73 and 102–105 contribute to the ATP site; these read RY and GDGS. Aspartate 103 serves as a coordination point for Mg(2+). 125-127 contributes to the substrate binding site; the sequence is TID. Aspartate 127 serves as the catalytic Proton acceptor. Arginine 154 contacts ADP. Substrate-binding positions include arginine 162 and 169–171; that span reads MGR. ADP-binding positions include 185-187 and 213-215; these read GAD and KKH. Substrate contacts are provided by residues glutamate 222, arginine 244, and 250–253; that span reads HIQR.

It belongs to the phosphofructokinase type A (PFKA) family. ATP-dependent PFK group I subfamily. Prokaryotic clade 'B1' sub-subfamily. Homotetramer. Requires Mg(2+) as cofactor.

The protein resides in the cytoplasm. The catalysed reaction is beta-D-fructose 6-phosphate + ATP = beta-D-fructose 1,6-bisphosphate + ADP + H(+). The protein operates within carbohydrate degradation; glycolysis; D-glyceraldehyde 3-phosphate and glycerone phosphate from D-glucose: step 3/4. Allosterically activated by ADP and other diphosphonucleosides, and allosterically inhibited by phosphoenolpyruvate. Functionally, catalyzes the phosphorylation of D-fructose 6-phosphate to fructose 1,6-bisphosphate by ATP, the first committing step of glycolysis. The polypeptide is ATP-dependent 6-phosphofructokinase (Streptococcus pneumoniae serotype 19F (strain G54)).